Reading from the N-terminus, the 164-residue chain is Endoribonuclease YbeY (164 aa).

Residues His111, His115, and His121 each contribute to the Zn(2+) site. Residues 142–164 (GYPDPYADDETETSPTVTTKDSE) form a disordered region. A compositionally biased stretch (polar residues) spans 154-164 (TSPTVTTKDSE).

Belongs to the endoribonuclease YbeY family. Zn(2+) is required as a cofactor.

The protein resides in the cytoplasm. In terms of biological role, single strand-specific metallo-endoribonuclease involved in late-stage 70S ribosome quality control and in maturation of the 3' terminus of the 16S rRNA. This chain is Endoribonuclease YbeY, found in Pseudomonas fluorescens (strain Pf0-1).